Here is a 377-residue protein sequence, read N- to C-terminus: Succinyl-diaminopimelate desuccinylase 2 (377 aa).

Histidine 62 contacts Zn(2+). Aspartate 64 is a catalytic residue. Aspartate 95 lines the Zn(2+) pocket. Glutamate 129 acts as the Proton acceptor in catalysis. The Zn(2+) site is built by glutamate 130, glutamate 158, and histidine 350.

The protein belongs to the peptidase M20A family. DapE subfamily. Homodimer. It depends on Zn(2+) as a cofactor. The cofactor is Co(2+).

It catalyses the reaction N-succinyl-(2S,6S)-2,6-diaminopimelate + H2O = (2S,6S)-2,6-diaminopimelate + succinate. Its pathway is amino-acid biosynthesis; L-lysine biosynthesis via DAP pathway; LL-2,6-diaminopimelate from (S)-tetrahydrodipicolinate (succinylase route): step 3/3. Catalyzes the hydrolysis of N-succinyl-L,L-diaminopimelic acid (SDAP), forming succinate and LL-2,6-diaminopimelate (DAP), an intermediate involved in the bacterial biosynthesis of lysine and meso-diaminopimelic acid, an essential component of bacterial cell walls. The sequence is that of Succinyl-diaminopimelate desuccinylase 2 from Shewanella loihica (strain ATCC BAA-1088 / PV-4).